A 161-amino-acid polypeptide reads, in one-letter code: Small ribosomal subunit protein uS9 (161 aa).

The protein belongs to the universal ribosomal protein uS9 family.

The sequence is that of Small ribosomal subunit protein uS9 from Rickettsia canadensis (strain McKiel).